Here is a 231-residue protein sequence, read N- to C-terminus: MAKLSKRVKAFKAKVDRTKAYPFDNAVALIKECASAKFDESIDISVQLGVDAKKSDQVVRGSVVLPAGTGKSVRVAVFATGEKAGQAKAAGADIVGMDDLAEQIKAGNMPFDIVIASPDTMRIVGTLGQILGPRGMMPNPKVGTVTPDVATAVKNAKAGQVQYRTDKAGIIHATIGRKSFSDEALKSNLLALIDALNKAKPATSKGVYLRKVSLSSTMGAGVRVDQSTLAA.

It belongs to the universal ribosomal protein uL1 family. Part of the 50S ribosomal subunit.

Binds directly to 23S rRNA. The L1 stalk is quite mobile in the ribosome, and is involved in E site tRNA release. Functionally, protein L1 is also a translational repressor protein, it controls the translation of the L11 operon by binding to its mRNA. The sequence is that of Large ribosomal subunit protein uL1 from Janthinobacterium sp. (strain Marseille) (Minibacterium massiliensis).